Consider the following 113-residue polypeptide: Cell cycle protein GpsB (113 aa).

A coiled-coil region spans residues 36-68; sequence LDMVIKDYSTFTQEIEALQAENIRLVQELDNAP.

This sequence belongs to the GpsB family. In terms of assembly, forms polymers through the coiled coil domains. Interacts with PBP1, MreC and EzrA.

The protein localises to the cytoplasm. In terms of biological role, divisome component that associates with the complex late in its assembly, after the Z-ring is formed, and is dependent on DivIC and PBP2B for its recruitment to the divisome. Together with EzrA, is a key component of the system that regulates PBP1 localization during cell cycle progression. Its main role could be the removal of PBP1 from the cell pole after pole maturation is completed. Also contributes to the recruitment of PBP1 to the division complex. Not essential for septum formation. The sequence is that of Cell cycle protein GpsB from Listeria innocua serovar 6a (strain ATCC BAA-680 / CLIP 11262).